Consider the following 139-residue polypeptide: Transcription antitermination protein NusB (139 aa).

This sequence belongs to the NusB family.

Functionally, involved in transcription antitermination. Required for transcription of ribosomal RNA (rRNA) genes. Binds specifically to the boxA antiterminator sequence of the ribosomal RNA (rrn) operons. The chain is Transcription antitermination protein NusB from Klebsiella pneumoniae (strain 342).